Reading from the N-terminus, the 61-residue chain is Large ribosomal subunit protein uL30 (61 aa).

This sequence belongs to the universal ribosomal protein uL30 family. In terms of assembly, part of the 50S ribosomal subunit.

In Thermosipho melanesiensis (strain DSM 12029 / CIP 104789 / BI429), this protein is Large ribosomal subunit protein uL30.